A 506-amino-acid polypeptide reads, in one-letter code: Protein CYCLOPS (506 aa).

2 disordered regions span residues 193 to 223 (TVNS…LDNP) and 385 to 434 (KENL…RSST). The span at 202–219 (TPSQTPTFVSPSSSSTSP) shows a compositional bias: low complexity. The span at 385 to 394 (KENLKDDRKK) shows a compositional bias: basic and acidic residues. Residues 415 to 418 (KKRR) carry the Nuclear localization signal motif. The segment covering 422 to 432 (SRKMAEAKERS) has biased composition (basic and acidic residues). Residues 441 to 506 (IQVVLKRCET…IERIVSDTNT (66 aa)) adopt a coiled-coil conformation.

This sequence belongs to the CYCLOPS family. Highly epressed in roots. Expressed at very low levels in leaves, stems and panicles.

The protein localises to the nucleus. Involved in arbuscular mycorrhizal (AM) symbiosis. Required for fungal infection in roots and arbuscule development during AM symbiosis. The sequence is that of Protein CYCLOPS from Oryza sativa subsp. japonica (Rice).